The sequence spans 375 residues: MHNGSPIIRRKSTRVYVGKVPIGDGAPIAVQSMTNTKTTDVDATVAQIKALERVGVDIVRVSIPTMDAAEAFKLIKQQSTVPLVADIHFDYRIALKVAEYGVDCLRINPGNIGNESRIREVVACARDYNIPIRIGINGGSLEKDIQEKYGEPTPEALLESAMRHVDILDRLNFDQFKVSVKASDVFLAVNSYRLLAKQINNPLHLGITEAGGARSGSVKSAIGLGLLLSEGIGDTLRISLAADPVEEVKVGFDILKSLRIRARGINFIACPTCSRQEFDVIGTVNALEQRLEDLITPMDVSIIGCVVNGPGEALVSTIGVTGARNHSGFYEDGVRQKERFDNKAMIDQLEAKIRAKASILDANNRIVINQLDDNK.

The [4Fe-4S] cluster site is built by Cys270, Cys273, Cys305, and Glu312.

It belongs to the IspG family. [4Fe-4S] cluster serves as cofactor.

It catalyses the reaction (2E)-4-hydroxy-3-methylbut-2-enyl diphosphate + oxidized [flavodoxin] + H2O + 2 H(+) = 2-C-methyl-D-erythritol 2,4-cyclic diphosphate + reduced [flavodoxin]. The protein operates within isoprenoid biosynthesis; isopentenyl diphosphate biosynthesis via DXP pathway; isopentenyl diphosphate from 1-deoxy-D-xylulose 5-phosphate: step 5/6. In terms of biological role, converts 2C-methyl-D-erythritol 2,4-cyclodiphosphate (ME-2,4cPP) into 1-hydroxy-2-methyl-2-(E)-butenyl 4-diphosphate. The protein is 4-hydroxy-3-methylbut-2-en-1-yl diphosphate synthase (flavodoxin) of Yersinia pestis (strain Pestoides F).